We begin with the raw amino-acid sequence, 70 residues long: Large ribosomal subunit protein eL38 (70 aa).

Residue Lys4 forms a Glycyl lysine isopeptide (Lys-Gly) (interchain with G-Cter in SUMO2) linkage. Lys9 bears the N6-acetyllysine; alternate mark. Lys9 is covalently cross-linked (Glycyl lysine isopeptide (Lys-Gly) (interchain with G-Cter in SUMO2); alternate). Lys67 is subject to N6-acetyllysine.

Belongs to the eukaryotic ribosomal protein eL38 family. As to quaternary structure, component of the large ribosomal subunit.

It is found in the cytoplasm. Functionally, component of the large ribosomal subunit. The ribosome is a large ribonucleoprotein complex responsible for the synthesis of proteins in the cell. In Homo sapiens (Human), this protein is Large ribosomal subunit protein eL38 (RPL38).